The chain runs to 354 residues: Glycerol-3-phosphate dehydrogenase [NAD(P)+] (354 aa).

4 residues coordinate NADPH: Ser27, Phe28, Arg48, and Lys121. The sn-glycerol 3-phosphate site is built by Lys121 and Gly149. Ala153 contacts NADPH. The sn-glycerol 3-phosphate site is built by Lys204, Asp257, Ser267, Arg268, and Asn269. The active-site Proton acceptor is the Lys204. Arg268 is a binding site for NADPH. NADPH is bound by residues Val292 and Glu294.

Belongs to the NAD-dependent glycerol-3-phosphate dehydrogenase family.

It is found in the cytoplasm. It carries out the reaction sn-glycerol 3-phosphate + NAD(+) = dihydroxyacetone phosphate + NADH + H(+). The enzyme catalyses sn-glycerol 3-phosphate + NADP(+) = dihydroxyacetone phosphate + NADPH + H(+). The protein operates within membrane lipid metabolism; glycerophospholipid metabolism. Catalyzes the reduction of the glycolytic intermediate dihydroxyacetone phosphate (DHAP) to sn-glycerol 3-phosphate (G3P), the key precursor for phospholipid synthesis. The chain is Glycerol-3-phosphate dehydrogenase [NAD(P)+] from Pseudomonas fluorescens (strain Pf0-1).